The following is a 613-amino-acid chain: Proline--tRNA ligase (613 aa).

The protein belongs to the class-II aminoacyl-tRNA synthetase family. ProS type 1 subfamily. As to quaternary structure, homodimer.

It is found in the cytoplasm. It catalyses the reaction tRNA(Pro) + L-proline + ATP = L-prolyl-tRNA(Pro) + AMP + diphosphate. Catalyzes the attachment of proline to tRNA(Pro) in a two-step reaction: proline is first activated by ATP to form Pro-AMP and then transferred to the acceptor end of tRNA(Pro). As ProRS can inadvertently accommodate and process non-cognate amino acids such as alanine and cysteine, to avoid such errors it has two additional distinct editing activities against alanine. One activity is designated as 'pretransfer' editing and involves the tRNA(Pro)-independent hydrolysis of activated Ala-AMP. The other activity is designated 'posttransfer' editing and involves deacylation of mischarged Ala-tRNA(Pro). The misacylated Cys-tRNA(Pro) is not edited by ProRS. This is Proline--tRNA ligase from Cyanothece sp. (strain PCC 7425 / ATCC 29141).